A 463-amino-acid polypeptide reads, in one-letter code: V-type proton ATPase subunit S1 (463 aa).

A signal peptide spans 1–32 (MMAATVVSRIRTGTGRAPVMWLSLSLVAVAAA). Positions 33 to 225 (VATEQQVPLV…TAVRPSRVAR (193 aa)) are excised as a propeptide. Over 33–412 (VATEQQVPLV…EQFSYASDCA (380 aa)) the chain is Lumenal. N-linked (GlcNAc...) asparagine glycans are attached at residues N164, N255, N267, N290, N297, N344, N351, and N399. The cysteines at positions 365 and 411 are disulfide-linked. A helical membrane pass occupies residues 413 to 433 (GFFSPGIWMGLLTTLFMLFIF). Residues 434–463 (TYGLHMILSLKTMDRFDDHKGPTITLTQIV) are Cytoplasmic-facing.

The protein belongs to the vacuolar ATPase subunit S1 family. Accessory component of the multisubunit proton-transporting vacuolar (V)-ATPase protein pump. Interacts (via N-terminus) with ATP6AP2 (via N-terminus). Interacts with RNASEK. Interacts with TMEM106B (via C-terminus). N-glycosylated. As to expression, expressed in brain cortex (at protein level). Highly expressed in islets of Langerhans. Expressed in pancreatic acini, pituitary gland, adrenal gland, lung, brain and bone marrow.

It is found in the endoplasmic reticulum membrane. The protein localises to the endoplasmic reticulum-Golgi intermediate compartment membrane. The protein resides in the cytoplasmic vesicle. It localises to the secretory vesicle. Its subcellular location is the synaptic vesicle membrane. It is found in the clathrin-coated vesicle membrane. Accessory subunit of the proton-transporting vacuolar (V)-ATPase protein pump, which is required for luminal acidification of secretory vesicles. Guides the V-type ATPase into specialized subcellular compartments, such as neuroendocrine regulated secretory vesicles or the ruffled border of the osteoclast, thereby regulating its activity. Involved in membrane trafficking and Ca(2+)-dependent membrane fusion. May play a role in the assembly of the V-type ATPase complex. In aerobic conditions, involved in intracellular iron homeostasis, thus triggering the activity of Fe(2+) prolyl hydroxylase (PHD) enzymes, and leading to HIF1A hydroxylation and subsequent proteasomal degradation. In islets of Langerhans cells, may regulate the acidification of dense-core secretory granules. This Mus musculus (Mouse) protein is V-type proton ATPase subunit S1 (Atp6ap1).